The chain runs to 31 residues: Putative translational regulatory protein ArgL (31 aa).

In terms of biological role, may serve a regulatory role in expression of downstream gene argF; in an argL-argF-lacZ fusion mutation of the start codon to a stop codon in argL increases expression of beta-galactosidase. In Escherichia coli (strain K12), this protein is Putative translational regulatory protein ArgL.